The sequence spans 299 residues: Bifunctional protein FolD (299 aa).

Residues 169–171 (GRS), S194, and I235 each bind NADP(+).

This sequence belongs to the tetrahydrofolate dehydrogenase/cyclohydrolase family. Homodimer.

It catalyses the reaction (6R)-5,10-methylene-5,6,7,8-tetrahydrofolate + NADP(+) = (6R)-5,10-methenyltetrahydrofolate + NADPH. The catalysed reaction is (6R)-5,10-methenyltetrahydrofolate + H2O = (6R)-10-formyltetrahydrofolate + H(+). It participates in one-carbon metabolism; tetrahydrofolate interconversion. In terms of biological role, catalyzes the oxidation of 5,10-methylenetetrahydrofolate to 5,10-methenyltetrahydrofolate and then the hydrolysis of 5,10-methenyltetrahydrofolate to 10-formyltetrahydrofolate. The protein is Bifunctional protein FolD of Trichormus variabilis (strain ATCC 29413 / PCC 7937) (Anabaena variabilis).